The primary structure comprises 591 residues: Aspartate--tRNA ligase (591 aa).

An L-aspartate-binding site is contributed by glutamate 173. The aspartate stretch occupies residues 197–200 (QLFK). Position 219 (arginine 219) interacts with L-aspartate. Residues 219 to 221 (RDE) and glutamine 228 contribute to the ATP site. Histidine 448 serves as a coordination point for L-aspartate. Glutamate 482 provides a ligand contact to ATP. Arginine 489 contributes to the L-aspartate binding site. 534 to 537 (GLDR) contacts ATP.

It belongs to the class-II aminoacyl-tRNA synthetase family. Type 1 subfamily. In terms of assembly, homodimer.

It localises to the cytoplasm. The enzyme catalyses tRNA(Asp) + L-aspartate + ATP = L-aspartyl-tRNA(Asp) + AMP + diphosphate. Its function is as follows. Catalyzes the attachment of L-aspartate to tRNA(Asp) in a two-step reaction: L-aspartate is first activated by ATP to form Asp-AMP and then transferred to the acceptor end of tRNA(Asp). The sequence is that of Aspartate--tRNA ligase from Shewanella sp. (strain MR-7).